The following is an 80-amino-acid chain: MARASEKGEEKKQSNNQVEKLVEAPVEFVREGTQFLAKCKKPDLKEYTKIVKAVGIGFIAVGIIGYAIKLIHIPIRYVIV.

The Cytoplasmic portion of the chain corresponds to 1–46; that stretch reads MARASEKGEEKKQSNNQVEKLVEAPVEFVREGTQFLAKCKKPDLKE. The chain crosses the membrane as a helical span at residues 47 to 75; that stretch reads YTKIVKAVGIGFIAVGIIGYAIKLIHIPI. Topologically, residues 76 to 80 are extracellular; that stretch reads RYVIV.

The protein belongs to the SecE/SEC61-gamma family. In terms of assembly, component of the heterotrimeric Sec61 complex, which is composed of SSH1, SBH1 and SSS1. Presumably three to four Sec61 heterotrimers assemble into an oligomeric ring with a central aqueous pore. In cotranslational ER import, the pore diameter varies from 9-15 A in a ribosome-free resting state to 40-60 A in a functional state when associated with the ribosome. The Sec61 complex is part of a channel-forming translocon complex whose composition seem to change dependent upon different functional states. During post-translational ER import the Sec61 complex associates with the Sec62/63 complex to form the Sec complex. SSH1 is a component of the heterotrimeric Ssh1 complex, which is composed of SSH1, SBH2 and SSS1. SSS1 interacts with OST1, OST4, SWP1 and WBP1, components of the OT complex.

The protein resides in the endoplasmic reticulum membrane. Part of the Sec61 complex, which is the major component of channel-forming translocon complex that mediates protein translocation across the endoplasmic reticulum (ER). The functional states of the translocon complex include co- and post-translational ER import, cotranslational membrane protein integration and retrograde transport of misfolded proteins out of the ER. In the cotranslational pathway, ribosomes synthesizing presecretory proteins are targeted to the translocon by the cytosolic signal recognition particle (SRP) and its ER-localized receptor. The association of the Sec61 complex with the ribosome is mediated by the 28S rRNA of the large ribosomal subunit. SRP-independent post-translational translocation requires the association of additional factors, such as the Sec62/63 complex and KAR2. Also part of the Ssh1 complex, which probably is the major component of a channel-forming translocon complex that may function exclusively in the cotranslational pathway of protein ER import. This is Protein transport protein SSS1 (SSS1) from Saccharomyces cerevisiae (strain ATCC 204508 / S288c) (Baker's yeast).